We begin with the raw amino-acid sequence, 521 residues long: Zinc finger protein 394 (521 aa).

The tract at residues 1-45 is disordered; it reads MAAGSGVVPPPLGAGLCTVKVEEDSPGNQESSGSGDWQNPETSRK. Lysine 20 is covalently cross-linked (Glycyl lysine isopeptide (Lys-Gly) (interchain with G-Cter in SUMO2)). The span at 26–41 shows a compositional bias: polar residues; sequence PGNQESSGSGDWQNPE. An SCAN box domain is found at 38–133; sequence QNPETSRKQF…RALDRASPQG (96 aa). The KRAB domain maps to 135-196; it reads MTFKDVAESL…KQEILKEAEP (62 aa). Lysine 259 is covalently cross-linked (Glycyl lysine isopeptide (Lys-Gly) (interchain with G-Cter in SUMO2)). 3 C2H2-type zinc fingers span residues 327-349, 355-377, and 383-405; these read YKCDSCEKGFRQRSDLFKHQRIH, YQCQECGKRFSQSAALVKHQRTH, and YACPECGECFRQSSHLSRHQRTH. A C2H2-type 4; atypical zinc finger spans residues 411–432; it reads YKCEECGEIVHVSSLFRHQRLH. Residue lysine 412 forms a Glycyl lysine isopeptide (Lys-Gly) (interchain with G-Cter in SUMO2) linkage. 3 consecutive C2H2-type zinc fingers follow at residues 438-460, 466-488, and 494-516; these read YKCGDCEKSFRQRSDLFKHQRTH, YACVVCGRRFSQSATLIKHQRTH, and YKCFQCGERFRQSTHLVRHQRIH.

Belongs to the krueppel C2H2-type zinc-finger protein family. Expressed at high level in testis.

Its subcellular location is the nucleus. Its function is as follows. May be involved in transcriptional regulation. This chain is Zinc finger protein 394 (Znf394), found in Mus musculus (Mouse).